A 415-amino-acid polypeptide reads, in one-letter code: Gamma-glutamyl phosphate reductase (415 aa).

Belongs to the gamma-glutamyl phosphate reductase family.

Its subcellular location is the cytoplasm. It catalyses the reaction L-glutamate 5-semialdehyde + phosphate + NADP(+) = L-glutamyl 5-phosphate + NADPH + H(+). It participates in amino-acid biosynthesis; L-proline biosynthesis; L-glutamate 5-semialdehyde from L-glutamate: step 2/2. In terms of biological role, catalyzes the NADPH-dependent reduction of L-glutamate 5-phosphate into L-glutamate 5-semialdehyde and phosphate. The product spontaneously undergoes cyclization to form 1-pyrroline-5-carboxylate. This is Gamma-glutamyl phosphate reductase from Dictyoglomus thermophilum (strain ATCC 35947 / DSM 3960 / H-6-12).